Consider the following 643-residue polypeptide: Arginine--tRNA ligase, mitochondrial (643 aa).

A 'HIGH' region motif is present at residues 188-198 (PNIAKPFHAGH).

This sequence belongs to the class-I aminoacyl-tRNA synthetase family.

Its subcellular location is the mitochondrion matrix. The enzyme catalyses tRNA(Arg) + L-arginine + ATP = L-arginyl-tRNA(Arg) + AMP + diphosphate. The polypeptide is Arginine--tRNA ligase, mitochondrial (MSR1) (Saccharomyces cerevisiae (strain ATCC 204508 / S288c) (Baker's yeast)).